The primary structure comprises 294 residues: ATP synthase gamma chain (294 aa).

Belongs to the ATPase gamma chain family. F-type ATPases have 2 components, CF(1) - the catalytic core - and CF(0) - the membrane proton channel. CF(1) has five subunits: alpha(3), beta(3), gamma(1), delta(1), epsilon(1). CF(0) has three main subunits: a, b and c.

The protein localises to the cell inner membrane. Produces ATP from ADP in the presence of a proton gradient across the membrane. The gamma chain is believed to be important in regulating ATPase activity and the flow of protons through the CF(0) complex. This Rhizobium rhizogenes (strain K84 / ATCC BAA-868) (Agrobacterium radiobacter) protein is ATP synthase gamma chain.